Reading from the N-terminus, the 95-residue chain is Bacterial microcompartment shell protein EutM (95 aa).

The BMC domain occupies 6-90 (ALGMIETKGL…PHFEVDAILP (85 aa)).

The protein belongs to the bacterial microcompartments protein family. Homohexamer; has a positively charged pore 9 Angstroms in diameter. The hexamers pack into a two-dimensional array. May interact with EutQ.

Its subcellular location is the bacterial microcompartment. It participates in amine and polyamine degradation; ethanolamine degradation. Its function is as follows. A component of the bacterial microcompartment (BMC) shell dedicated to ethanolamine degradation. Each homohexamer has a central pore with an opening of up to 9.0 Angstroms. Expression of the eut operon may allow this bacteria to use ethanolamine as a carbon, nitrogen and energy source. The pore probably allows metabolite passage into and out of the BMC. The sequence is that of Bacterial microcompartment shell protein EutM from Clostridioides difficile (strain 630) (Peptoclostridium difficile).